The sequence spans 363 residues: Putative serine/threonine-protein kinase gskl-1 (363 aa).

Positions 20–304 (FGAHKLCGSG…AIDVLKMPLF (285 aa)) constitute a Protein kinase domain. Residues 26–34 (CGSGRFSNV) and lysine 50 contribute to the ATP site. Residue aspartate 146 is the Proton acceptor of the active site. The tract at residues 311 to 363 (PPKKRSNGVEMPNLASYTEMHHKREPETEVVADIQTTEKAEKESDSTNEELED) is disordered. A compositionally biased stretch (basic and acidic residues) spans 346 to 355 (TTEKAEKESD).

It belongs to the protein kinase superfamily. Ser/Thr protein kinase family. As to expression, expressed during multiple stages of spermatogenesis, in males and hermaphrodites (at protein level).

It localises to the cytoplasm. The protein localises to the cell projection. Its subcellular location is the pseudopodium. The enzyme catalyses L-seryl-[protein] + ATP = O-phospho-L-seryl-[protein] + ADP + H(+). The catalysed reaction is L-threonyl-[protein] + ATP = O-phospho-L-threonyl-[protein] + ADP + H(+). In terms of biological role, may be an autophosphorylating tyrosine kinase, a bifunctional (serine/tyrosine-specific) protein kinase, or a serine kinase that is a substrate for an associated tyrosine kinase. Acting in concert with putative serine/threonine-protein kinase gskl-2, required for sister chromatid segregation and spermatid budding during male meiosis. Plays a role in regulating female meiosis II, together with gskl-2. Involved in sperm pseudopod formation and function, together with gskl-2. This is Putative serine/threonine-protein kinase gskl-1 from Caenorhabditis elegans.